Here is a 138-residue protein sequence, read N- to C-terminus: Actophorin (138 aa).

At Ser2 the chain carries Blocked amino end (Ser). The 132-residue stretch at Gly3 to Lys134 folds into the ADF-H domain.

Belongs to the actin-binding proteins ADF family. In terms of assembly, monomer.

It is found in the cytoplasm. In terms of biological role, forms a one to one complex with monomeric actin. Can regulate the pool available for polymerization. Severs actin filaments in a dose-dependent manner. This is Actophorin from Acanthamoeba castellanii (Amoeba).